A 96-amino-acid chain; its full sequence is UPF0235 protein YggU (96 aa).

It belongs to the UPF0235 family.

This chain is UPF0235 protein YggU, found in Salmonella typhi.